The following is a 142-amino-acid chain: ER-derived vesicles protein ERV15 (142 aa).

Topologically, residues 1–7 (MSGTGLS) are cytoplasmic. Residues 8 to 28 (LFVTGLILNCLNSICQIYFTI) traverse the membrane as a helical segment. The Extracellular segment spans residues 29–55 (LYGDLEADYINSIELCKRVNRLSVPEA). Residues 56–76 (ILQAFISALFLFNGYWFVFLL) form a helical membrane-spanning segment. Residues 77–114 (NVPVLAYNASKVYKKTHLLDATDIFRKLGRCKIECFLK) are Cytoplasmic-facing. Residues 115–135 (LGFYLLIFFFYFYRMVTALLE) traverse the membrane as a helical segment. Topologically, residues 136–142 (NDANLIS) are extracellular.

This sequence belongs to the cornichon family.

The protein localises to the membrane. This is ER-derived vesicles protein ERV15 (ERV15) from Saccharomyces cerevisiae (strain ATCC 204508 / S288c) (Baker's yeast).